We begin with the raw amino-acid sequence, 110 residues long: DNA-binding protein Pars_1791 (110 aa).

The protein belongs to the PDCD5 family.

The chain is DNA-binding protein Pars_1791 from Pyrobaculum arsenaticum (strain DSM 13514 / JCM 11321 / PZ6).